The following is a 134-amino-acid chain: UPF0412 protein YaaI (134 aa).

The N-terminal stretch at 1–23 is a signal peptide; it reads MKSVFTISASLAISLMLCCTAQA.

The protein belongs to the UPF0412 family.

This is UPF0412 protein YaaI from Escherichia coli O157:H7.